Here is a 224-residue protein sequence, read N- to C-terminus: Flagellar L-ring protein (224 aa).

An N-terminal signal peptide occupies residues 1–15 (MARYFILAVALLLTA). Cysteine 16 is lipidated: N-palmitoyl cysteine. Cysteine 16 is lipidated: S-diacylglycerol cysteine.

The protein belongs to the FlgH family. In terms of assembly, the basal body constitutes a major portion of the flagellar organelle and consists of four rings (L,P,S, and M) mounted on a central rod.

It localises to the cell outer membrane. The protein resides in the bacterial flagellum basal body. Its function is as follows. Assembles around the rod to form the L-ring and probably protects the motor/basal body from shearing forces during rotation. This chain is Flagellar L-ring protein, found in Shewanella sp. (strain MR-7).